The sequence spans 681 residues: Sorting nexin-41 (681 aa).

Residues 1-12 (MSTDNLFEDIEQ) show a composition bias toward acidic residues. The interval 1–94 (MSTDNLFEDI…HNTSLNNGYP (94 aa)) is disordered. A compositionally biased stretch (polar residues) spans 13–24 (DNNPSFYGNPSI). Residues 113–236 (NDSQLQVDII…KFFDPNYELC (124 aa)) enclose the PX domain. Residues Arg-151, Ser-153, Lys-177, and Arg-200 each contribute to the a 1,2-diacyl-sn-glycero-3-phospho-(1D-myo-inositol-3-phosphate) site. Disordered stretches follow at residues 475–505 (LASR…TENF) and 558–597 (TATG…QTSI). Low complexity-rich tracts occupy residues 482–497 (DNDS…NNND) and 558–589 (TATG…QSQS).

It belongs to the sorting nexin family.

The protein resides in the endosome membrane. It is found in the endomembrane system. Functionally, may be required for cytoplasm to vacuole transport (Cvt) and pexophagy. The protein is Sorting nexin-41 (SNX41) of Candida albicans (strain SC5314 / ATCC MYA-2876) (Yeast).